The following is a 357-amino-acid chain: MNDTSELIMVAMSGGVDSSVAAMLLLEQGYDVAGVSLQLKSNNEPYGNGYNLKLINRAREVAAALGIPHYVVDLSDIFSQRVIADFCQQYSQGRTPNPCIRCNYYVKIGALLEKIPDFNAGYLATGHYARVLSDENGTHLLKGADEKKDQSYFLYTLPPESLSRLIFPLGKRYKKDIIRLADKMKLPVSQKESQDVCFIPDGDYKSFLATRMGFTPGKILDKTGKILGEHQGLPLYTIGQRQGLGLASNEKLFVSDMNPEANTIMVASHDQLYTSRILLSNFIWRESRIPLDTPGMIVKVRYKAAPAEVKKISQTGDFYLLELASPVWAATPGQAAVIYLGDMVLGGGIIEHGGDVA.

ATP is bound by residues 11–18 (AMSGGVDS) and L37. Catalysis depends on C102, which acts as the Nucleophile. A disulfide bond links C102 and C197. Residue G126 participates in ATP binding. Residues 148–150 (KDQ) are interaction with tRNA. The active-site Cysteine persulfide intermediate is C197. The interval 301–302 (RY) is interaction with tRNA.

Belongs to the MnmA/TRMU family.

The protein resides in the cytoplasm. The catalysed reaction is S-sulfanyl-L-cysteinyl-[protein] + uridine(34) in tRNA + AH2 + ATP = 2-thiouridine(34) in tRNA + L-cysteinyl-[protein] + A + AMP + diphosphate + H(+). Functionally, catalyzes the 2-thiolation of uridine at the wobble position (U34) of tRNA, leading to the formation of s(2)U34. The chain is tRNA-specific 2-thiouridylase MnmA from Dehalococcoides mccartyi (strain ATCC BAA-2266 / KCTC 15142 / 195) (Dehalococcoides ethenogenes (strain 195)).